Reading from the N-terminus, the 323-residue chain is tRNA(Ile)-lysidine synthase (323 aa).

An ATP-binding site is contributed by 33–38 (SGGPDS).

The protein belongs to the tRNA(Ile)-lysidine synthase family.

The protein resides in the cytoplasm. The enzyme catalyses cytidine(34) in tRNA(Ile2) + L-lysine + ATP = lysidine(34) in tRNA(Ile2) + AMP + diphosphate + H(+). Ligates lysine onto the cytidine present at position 34 of the AUA codon-specific tRNA(Ile) that contains the anticodon CAU, in an ATP-dependent manner. Cytidine is converted to lysidine, thus changing the amino acid specificity of the tRNA from methionine to isoleucine. The sequence is that of tRNA(Ile)-lysidine synthase from Mycobacterium bovis (strain ATCC BAA-935 / AF2122/97).